The sequence spans 111 residues: Probable 4-amino-4-deoxy-L-arabinose-phosphoundecaprenol flippase subunit ArnE (111 aa).

3 helical membrane passes run 38–58, 61–81, and 91–111; these read LWLG…LLVL, LPVG…TLAA, and PRHW…GSAA. The region spanning 40–109 is the EamA domain; that stretch reads LGLALICMGA…IISGIIILGS (70 aa).

Belongs to the ArnE family. As to quaternary structure, heterodimer of ArnE and ArnF.

The protein localises to the cell inner membrane. The protein operates within bacterial outer membrane biogenesis; lipopolysaccharide biosynthesis. In terms of biological role, translocates 4-amino-4-deoxy-L-arabinose-phosphoundecaprenol (alpha-L-Ara4N-phosphoundecaprenol) from the cytoplasmic to the periplasmic side of the inner membrane. In Salmonella agona (strain SL483), this protein is Probable 4-amino-4-deoxy-L-arabinose-phosphoundecaprenol flippase subunit ArnE.